The chain runs to 1331 residues: Probable serine/threonine-protein kinase DDB_G0272254 (1331 aa).

Composition is skewed to low complexity over residues 1-42 (METS…NSSS), 96-116 (NDNN…NNNN), and 153-175 (TQQT…STPS). Disordered regions lie at residues 1–43 (METS…SSSA), 92–132 (DKIC…QQIS), and 150–175 (ILNT…STPS). The next 2 membrane-spanning stretches (helical) occupy residues 201–221 (FGFS…IYIL) and 224–244 (FVLK…FVIY). The segment covering 259-287 (SINDSDSSSNNNNNNNNTTTTNNDSASTK) has biased composition (low complexity). Disordered stretches follow at residues 259-300 (SIND…PETY), 320-419 (NLNN…LSKE), 435-464 (SVGK…SHNI), and 512-581 (AHSN…VVGN). Polar residues predominate over residues 288–299 (GNNNNEISSPET). The segment covering 436 to 450 (VGKTHNRSSSGSDSI) has biased composition (polar residues). The segment covering 514 to 531 (SNNNNNNNNSNTNNNNNN) has biased composition (low complexity). Residues 532–555 (QSVSAPVSQLATPVYQTPGTNSVV) show a composition bias toward polar residues. A compositionally biased stretch (low complexity) spans 557 to 577 (NLENDNENNNDSFSDINDNNS). Kelch repeat units lie at residues 665–710 (SLVL…NHDY), 716–769 (KFYL…RYGN), 770–816 (RFLL…GHTS), 822–868 (KLII…ELND), 909–959 (NIVM…LIKN), and 962–1008 (KLFI…NNNN). Residues 834–860 (NNNNNNNNNNNNNNNNNNNNNNNNNNN) are compositionally biased toward low complexity. The segment at 834–862 (NNNNNNNNNNNNNNNNNNNNNNNNNNNKG) is disordered. Residues 976-1042 (NNNSSSGGNN…NNNNNNNNNN (67 aa)) form a disordered region. One can recognise a Protein kinase domain in the interval 1073-1331 (IKIDKEIGKG…EITNYLTKTF (259 aa)). ATP contacts are provided by residues 1079-1087 (IGKGHFSKV) and Lys1100. Residue Asp1200 is the Proton acceptor of the active site.

This sequence belongs to the protein kinase superfamily. TKL Ser/Thr protein kinase family.

The protein localises to the membrane. It catalyses the reaction L-seryl-[protein] + ATP = O-phospho-L-seryl-[protein] + ADP + H(+). It carries out the reaction L-threonyl-[protein] + ATP = O-phospho-L-threonyl-[protein] + ADP + H(+). In Dictyostelium discoideum (Social amoeba), this protein is Probable serine/threonine-protein kinase DDB_G0272254.